We begin with the raw amino-acid sequence, 374 residues long: C-C chemokine receptor type 6 (374 aa).

At 1–47 (MSGESMNFSDVFDSSEDYFVSVNTSYYSVDSEMLLCSLQEVRQFSRL) the chain is on the extracellular side. N-linked (GlcNAc...) asparagine glycans are attached at residues Asn7 and Asn23. Residues 48 to 74 (FVPIAYSLICVFGLLGNILVVITFAFY) form a helical membrane-spanning segment. Topologically, residues 75–83 (KKARSMTDV) are cytoplasmic. A helical membrane pass occupies residues 84–104 (YLLNMAIADILFVLTLPFWAV). Over 105–119 (SHATGAWVFSNATCK) the chain is Extracellular. Cys118 and Cys197 form a disulfide bridge. The helical transmembrane segment at 120–141 (LLKGIYAINFNCGMLLLTCISM) threads the bilayer. The Cytoplasmic portion of the chain corresponds to 142-159 (DRYIAIVQATKSFRLRSR). A helical transmembrane segment spans residues 160–180 (TLPRSKIICLVVWGLSVIISS). Residues 181-211 (STFVFNQKYNTQGSDVCEPKYQTVSEPIRWK) lie on the Extracellular side of the membrane. A helical membrane pass occupies residues 212-238 (LLMLGLELLFGFFIPLMFMIFCYTFIV). Topologically, residues 239 to 254 (KTLVQAQNSKRHKAIR) are cytoplasmic. Residues 255-279 (VIIAVVLVFLACQIPHNMVLLVTAA) form a helical membrane-spanning segment. Topologically, residues 280–303 (NLGKMNRSCQSEKLIGYTKTVTEV) are extracellular. The chain crosses the membrane as a helical span at residues 304–321 (LAFLHCCLNPVLYAFIGQ). The Cytoplasmic segment spans residues 322-374 (KFRNYFLKILKDLWCVRRKYKSSGFSCAGRYSENISRQTSETADNDNASSFTM).

It belongs to the G-protein coupled receptor 1 family. Sperm. Mainly localized in the tail and in the postacrosomal region but is also found in the midpiece and basal region in a small percentage of sperm cells. Reduced levels found in the sperms of asthenozoospermia and leukocytospermia patients (at protein level). Spleen, lymph nodes, appendix, and fetal liver. Expressed in lymphocytes, T-cells and B-cells but not in natural killer cells, monocytes or granulocytes.

The protein localises to the cell membrane. The protein resides in the cell surface. Functionally, receptor for the C-C type chemokine CCL20. Binds to CCL20 and subsequently transduces a signal by increasing the intracellular calcium ion levels. Although CCL20 is its major ligand it can also act as a receptor for non-chemokine ligands such as beta-defensins. Binds to defensin DEFB1 leading to increase in intracellular calcium ions and cAMP levels. Its binding to DEFB1 is essential for the function of DEFB1 in regulating sperm motility and bactericidal activity. Binds to defensins DEFB4 and DEFB4A/B and mediates their chemotactic effects. The ligand-receptor pair CCL20-CCR6 is responsible for the chemotaxis of dendritic cells (DC), effector/ memory T-cells and B-cells and plays an important role at skin and mucosal surfaces under homeostatic and inflammatory conditions, as well as in pathology, including cancer and various autoimmune diseases. CCR6-mediated signals are essential for immune responses to microbes in the intestinal mucosa and in the modulation of inflammatory responses initiated by tissue insult and trauma. CCR6 is essential for the recruitment of both the pro-inflammatory IL17 producing helper T-cells (Th17) and the regulatory T-cells (Treg) to sites of inflammation. Required for the normal migration of Th17 cells in Peyers-patches and other related tissue sites of the intestine and plays a role in regulating effector T-cell balance and distribution in inflamed intestine. Plays an important role in the coordination of early thymocyte precursor migration events important for normal subsequent thymocyte precursor development, but is not required for the formation of normal thymic natural regulatory T-cells (nTregs). Required for optimal differentiation of DN2 and DN3 thymocyte precursors. Essential for B-cell localization in the subepithelial dome of Peyers-patches and for efficient B-cell isotype switching to IgA in the Peyers-patches. Essential for appropriate anatomical distribution of memory B-cells in the spleen and for the secondary recall response of memory B-cells. Positively regulates sperm motility and chemotaxis via its binding to CCL20. The protein is C-C chemokine receptor type 6 (CCR6) of Homo sapiens (Human).